A 546-amino-acid polypeptide reads, in one-letter code: Probable protein kinase UbiB (546 aa).

Residues 123-501 form the Protein kinase domain; sequence DFDETPLASA…SRRQGQARYL (379 aa). ATP-binding positions include 129–137 and K152; that span reads LASASIAQV. D287 functions as the Proton acceptor in the catalytic mechanism. Helical transmembrane passes span 498–517 and 522–541; these read ARYLLGVGASLLLAGVFLLT and IEWGQISLAGAGLCWLLGWL.

Belongs to the ABC1 family. UbiB subfamily.

The protein localises to the cell inner membrane. It participates in cofactor biosynthesis; ubiquinone biosynthesis [regulation]. Its function is as follows. Is probably a protein kinase regulator of UbiI activity which is involved in aerobic coenzyme Q (ubiquinone) biosynthesis. The chain is Probable protein kinase UbiB from Aeromonas hydrophila subsp. hydrophila (strain ATCC 7966 / DSM 30187 / BCRC 13018 / CCUG 14551 / JCM 1027 / KCTC 2358 / NCIMB 9240 / NCTC 8049).